A 560-amino-acid polypeptide reads, in one-letter code: Membrane protein insertase YidC (560 aa).

The helical transmembrane segment at I7–Y27 threads the bilayer. The tract at residues A43–L72 is disordered. 4 helical membrane passes run I367 to F387, L437 to L457, F468 to M488, and P515 to V535.

It belongs to the OXA1/ALB3/YidC family. Type 1 subfamily. In terms of assembly, interacts with the Sec translocase complex via SecD. Specifically interacts with transmembrane segments of nascent integral membrane proteins during membrane integration.

The protein resides in the cell inner membrane. In terms of biological role, required for the insertion and/or proper folding and/or complex formation of integral membrane proteins into the membrane. Involved in integration of membrane proteins that insert both dependently and independently of the Sec translocase complex, as well as at least some lipoproteins. Aids folding of multispanning membrane proteins. The polypeptide is Membrane protein insertase YidC (Pseudomonas fluorescens (strain SBW25)).